Reading from the N-terminus, the 260-residue chain is UPF0758 protein Smed_1459 (260 aa).

The 123-residue stretch at 138–260 (VLSSWSAVID…HVSLKGLQLF (123 aa)) folds into the MPN domain. 3 residues coordinate Zn(2+): histidine 209, histidine 211, and aspartate 222. The JAMM motif signature appears at 209-222 (HNHPSGDPTPSCAD).

The protein belongs to the UPF0758 family.

This chain is UPF0758 protein Smed_1459, found in Sinorhizobium medicae (strain WSM419) (Ensifer medicae).